A 217-amino-acid chain; its full sequence is ATP synthase F(0) complex subunit a (217 aa).

6 helical membrane passes run methionine 20–proline 40, proline 70–phenylalanine 90, methionine 100–cysteine 120, methionine 126–isoleucine 146, leucine 166–isoleucine 188, and methionine 193–serine 215.

Belongs to the ATPase A chain family. Component of the ATP synthase complex composed at least of ATP5F1A/subunit alpha, ATP5F1B/subunit beta, ATP5MC1/subunit c (homooctomer), MT-ATP6/subunit a, MT-ATP8/subunit 8, ATP5ME/subunit e, ATP5MF/subunit f, ATP5MG/subunit g, ATP5MK/subunit k, ATP5MJ/subunit j, ATP5F1C/subunit gamma, ATP5F1D/subunit delta, ATP5F1E/subunit epsilon, ATP5PF/subunit F6, ATP5PB/subunit b, ATP5PD/subunit d, ATP5PO/subunit OSCP. ATP synthase complex consists of a soluble F(1) head domain (subunits alpha(3) and beta(3)) - the catalytic core - and a membrane F(0) domain - the membrane proton channel (subunits c, a, 8, e, f, g, k and j). These two domains are linked by a central stalk (subunits gamma, delta, and epsilon) rotating inside the F1 region and a stationary peripheral stalk (subunits F6, b, d, and OSCP). Interacts with DNAJC30; interaction is direct.

It localises to the mitochondrion inner membrane. The enzyme catalyses H(+)(in) = H(+)(out). Functionally, subunit a, of the mitochondrial membrane ATP synthase complex (F(1)F(0) ATP synthase or Complex V) that produces ATP from ADP in the presence of a proton gradient across the membrane which is generated by electron transport complexes of the respiratory chain. ATP synthase complex consist of a soluble F(1) head domain - the catalytic core - and a membrane F(1) domain - the membrane proton channel. These two domains are linked by a central stalk rotating inside the F(1) region and a stationary peripheral stalk. During catalysis, ATP synthesis in the catalytic domain of F(1) is coupled via a rotary mechanism of the central stalk subunits to proton translocation. With the subunit c (ATP5MC1), forms the proton-conducting channel in the F(0) domain, that contains two crucial half-channels (inlet and outlet) that facilitate proton movement from the mitochondrial intermembrane space (IMS) into the matrix. Protons are taken up via the inlet half-channel and released through the outlet half-channel, following a Grotthuss mechanism. The polypeptide is ATP synthase F(0) complex subunit a (Rhopalosiphum padi (Bird cherry-oat aphid)).